The primary structure comprises 395 residues: Elongation factor Tu (395 aa).

One can recognise a tr-type G domain in the interval 10 to 204 (KPHVNVGTIG…AVDEYIPEPT (195 aa)). The G1 stretch occupies residues 19–26 (GHVDHGKT). GTP is bound at residue 19 to 26 (GHVDHGKT). Mg(2+) is bound at residue threonine 26. A G2 region spans residues 60 to 64 (GITIA). The interval 81 to 84 (DCPG) is G3. GTP contacts are provided by residues 81-85 (DCPGH) and 136-139 (NKVD). A G4 region spans residues 136–139 (NKVD). Residues 174-176 (SAL) form a G5 region.

The protein belongs to the TRAFAC class translation factor GTPase superfamily. Classic translation factor GTPase family. EF-Tu/EF-1A subfamily. In terms of assembly, monomer.

Its subcellular location is the cytoplasm. The enzyme catalyses GTP + H2O = GDP + phosphate + H(+). Functionally, GTP hydrolase that promotes the GTP-dependent binding of aminoacyl-tRNA to the A-site of ribosomes during protein biosynthesis. This is Elongation factor Tu from Exiguobacterium sibiricum (strain DSM 17290 / CCUG 55495 / CIP 109462 / JCM 13490 / 255-15).